The chain runs to 202 residues: Nucleoside triphosphate pyrophosphatase (202 aa).

The active-site Proton acceptor is the aspartate 79.

It belongs to the Maf family. A divalent metal cation is required as a cofactor.

It localises to the cytoplasm. It catalyses the reaction a ribonucleoside 5'-triphosphate + H2O = a ribonucleoside 5'-phosphate + diphosphate + H(+). The enzyme catalyses a 2'-deoxyribonucleoside 5'-triphosphate + H2O = a 2'-deoxyribonucleoside 5'-phosphate + diphosphate + H(+). Its function is as follows. Nucleoside triphosphate pyrophosphatase. May have a dual role in cell division arrest and in preventing the incorporation of modified nucleotides into cellular nucleic acids. In Bradyrhizobium diazoefficiens (strain JCM 10833 / BCRC 13528 / IAM 13628 / NBRC 14792 / USDA 110), this protein is Nucleoside triphosphate pyrophosphatase.